Reading from the N-terminus, the 120-residue chain is Peptidyl-tRNA hydrolase (120 aa).

The protein belongs to the PTH2 family.

It localises to the cytoplasm. The catalysed reaction is an N-acyl-L-alpha-aminoacyl-tRNA + H2O = an N-acyl-L-amino acid + a tRNA + H(+). The natural substrate for this enzyme may be peptidyl-tRNAs which drop off the ribosome during protein synthesis. The protein is Peptidyl-tRNA hydrolase of Sulfolobus acidocaldarius (strain ATCC 33909 / DSM 639 / JCM 8929 / NBRC 15157 / NCIMB 11770).